A 400-amino-acid chain; its full sequence is Subtilisin-like protease 7 (400 aa).

Residues 1–20 form the signal peptide; sequence MGFITKAIPLALAAASVING. Positions 21-119 are excised as a propeptide; it reads AEIMETRAGV…IERDARVQIN (99 aa). An Inhibitor I9 domain is found at 36-118; the sequence is KYIVVMNDGM…YIERDARVQI (83 aa). N-linked (GlcNAc...) asparagine glycosylation is present at Asn58. The Peptidase S8 domain maps to 129 to 400; the sequence is SWGLARVGSK…SKLINNGSGM (272 aa). Residues Asp161 and His192 each act as charge relay system in the active site. N-linked (GlcNAc...) asparagine glycans are attached at residues Asn222 and Asn252. Residue Ser346 is the Charge relay system of the active site. N-linked (GlcNAc...) asparagine glycosylation is present at Asn396.

The protein belongs to the peptidase S8 family.

The protein resides in the secreted. In terms of biological role, secreted subtilisin-like serine protease with keratinolytic activity that contributes to pathogenicity. In Arthroderma benhamiae (Trichophyton mentagrophytes), this protein is Subtilisin-like protease 7 (SUB7).